A 466-amino-acid polypeptide reads, in one-letter code: Proline--tRNA ligase (466 aa).

Belongs to the class-II aminoacyl-tRNA synthetase family. ProS type 3 subfamily. In terms of assembly, homodimer.

The protein localises to the cytoplasm. It catalyses the reaction tRNA(Pro) + L-proline + ATP = L-prolyl-tRNA(Pro) + AMP + diphosphate. Its function is as follows. Catalyzes the attachment of proline to tRNA(Pro) in a two-step reaction: proline is first activated by ATP to form Pro-AMP and then transferred to the acceptor end of tRNA(Pro). The protein is Proline--tRNA ligase of Picrophilus torridus (strain ATCC 700027 / DSM 9790 / JCM 10055 / NBRC 100828 / KAW 2/3).